Consider the following 148-residue polypeptide: ASCH domain-containing ribonuclease (148 aa).

The region spanning 13–70 (SLWPEFAKAIVSGKKTVEFRRRIPLPALSARIWIYATRPVKSVIGFAYLEAIVQGDVN) is the ASCH domain.

The cofactor is Mn(2+). It depends on Ni(2+) as a cofactor.

In terms of biological role, shows sequence-specific endoribonuclease activity towards single-stranded RNA (ssRNA), with a preference for the bond between pyrimidine and adenine nucleotides. May also have 5'-exonuclease activity. This Zymomonas mobilis subsp. mobilis (strain ATCC 10988 / DSM 424 / LMG 404 / NCIMB 8938 / NRRL B-806 / ZM1) protein is ASCH domain-containing ribonuclease.